Consider the following 296-residue polypeptide: 4-hydroxybenzoate octaprenyltransferase (296 aa).

The next 8 membrane-spanning stretches (helical) occupy residues 29–49 (IGIY…ADGV), 55–75 (LLIF…INDF), 102–122 (AWIT…LTNA), 146–166 (YYPQ…AFTA), 169–189 (GELP…TVAY), 219–239 (LIIG…GNRF), 241–261 (LGLC…WEAW), and 275–295 (FLHN…DYAL).

The protein belongs to the UbiA prenyltransferase family. The cofactor is Mg(2+).

It localises to the cell inner membrane. It carries out the reaction all-trans-octaprenyl diphosphate + 4-hydroxybenzoate = 4-hydroxy-3-(all-trans-octaprenyl)benzoate + diphosphate. The protein operates within cofactor biosynthesis; ubiquinone biosynthesis. Functionally, catalyzes the prenylation of para-hydroxybenzoate (PHB) with an all-trans polyprenyl group. Mediates the second step in the final reaction sequence of ubiquinone-8 (UQ-8) biosynthesis, which is the condensation of the polyisoprenoid side chain with PHB, generating the first membrane-bound Q intermediate 3-octaprenyl-4-hydroxybenzoate. The sequence is that of 4-hydroxybenzoate octaprenyltransferase from Pseudomonas aeruginosa (strain LESB58).